The primary structure comprises 524 residues: Light-independent protochlorophyllide reductase subunit B (524 aa).

D36 is a binding site for [4Fe-4S] cluster. D290 (proton donor) is an active-site residue. 425-426 provides a ligand contact to substrate; the sequence is GL.

It belongs to the ChlB/BchB/BchZ family. Protochlorophyllide reductase is composed of three subunits; ChlL, ChlN and ChlB. Forms a heterotetramer of two ChlB and two ChlN subunits. The cofactor is [4Fe-4S] cluster.

It catalyses the reaction chlorophyllide a + oxidized 2[4Fe-4S]-[ferredoxin] + 2 ADP + 2 phosphate = protochlorophyllide a + reduced 2[4Fe-4S]-[ferredoxin] + 2 ATP + 2 H2O. The protein operates within porphyrin-containing compound metabolism; chlorophyll biosynthesis (light-independent). In terms of biological role, component of the dark-operative protochlorophyllide reductase (DPOR) that uses Mg-ATP and reduced ferredoxin to reduce ring D of protochlorophyllide (Pchlide) to form chlorophyllide a (Chlide). This reaction is light-independent. The NB-protein (ChlN-ChlB) is the catalytic component of the complex. The chain is Light-independent protochlorophyllide reductase subunit B from Parasynechococcus marenigrum (strain WH8102).